Reading from the N-terminus, the 135-residue chain is Hemoglobin subunit alpha (135 aa).

One can recognise a Globin domain in the interval 1–135 (AAVVALWGKI…VALALAERYK (135 aa)). H52 lines the O2 pocket. H81 provides a ligand contact to heme b.

Belongs to the globin family. Hb1 is a heterotetramer of two alpha chains and two beta-1 chains. Hb2 is a heterotetramer of two alpha chains and two beta-2 chains. The N-terminus is blocked. In terms of tissue distribution, red blood cells.

Functionally, involved in oxygen transport from gills to the various peripheral tissues. The sequence is that of Hemoglobin subunit alpha from Dissostichus eleginoides (Patagonian toothfish).